Reading from the N-terminus, the 544-residue chain is tRNA pseudouridine synthase 1 (544 aa).

Composition is skewed to basic and acidic residues over residues Met-1 to Tyr-10 and Arg-31 to Glu-61. Residues Met-1–Lys-74 are disordered. Asp-134 (nucleophile) is an active-site residue. The disordered stretch occupies residues Ile-495 to Asn-544. Positions Arg-513–Glu-525 are enriched in basic and acidic residues.

The protein belongs to the tRNA pseudouridine synthase TruA family. Zn(2+) serves as cofactor.

The protein localises to the nucleus. It carries out the reaction a uridine in tRNA = a pseudouridine in tRNA. It catalyses the reaction uridine in snRNA = pseudouridine in snRNA. The enzyme catalyses a uridine in mRNA = a pseudouridine in mRNA. Its function is as follows. Formation of pseudouridine at positions 27 and 28 in the anticodon stem and loop of transfer RNAs; at positions 34 and 36 of intron-containing precursor tRNA(Ile) and at position 35 in the intron-containing tRNA(Tyr). Catalyzes pseudouridylation at position 44 in U2 snRNA. Also catalyzes pseudouridylation of mRNAs. In Saccharomyces cerevisiae (strain ATCC 204508 / S288c) (Baker's yeast), this protein is tRNA pseudouridine synthase 1 (PUS1).